Reading from the N-terminus, the 174-residue chain is Co-chaperone protein HscB homolog (174 aa).

Positions 2–74 (NYFELFKFSP…IRRAEHMLSL (73 aa)) constitute a J domain.

Belongs to the HscB family. In terms of assembly, interacts with HscA and stimulates its ATPase activity.

Co-chaperone involved in the maturation of iron-sulfur cluster-containing proteins. Seems to help targeting proteins to be folded toward HscA. The polypeptide is Co-chaperone protein HscB homolog (Shewanella baltica (strain OS185)).